A 224-amino-acid chain; its full sequence is Oxygen-evolving enhancer protein 3-1, chloroplastic (224 aa).

Residues 1 to 44 constitute a chloroplast transit peptide; that stretch reads MASMGGLHGASPAVLEGSLKINGSSRLNGSGRVAVAQRSRLVVR. The transit peptide at 45 to 75 directs the protein to the thylakoid; it reads AQQSEETSRRSVIGLVAAGLAGGSFVQAVLA. Threonine 189 is modified (phosphothreonine). Tyrosine 209 is modified (phosphotyrosine). Position 212 is a phosphothreonine (threonine 212).

The protein belongs to the PsbQ family. In terms of tissue distribution, expressed in green tissue, with high steady-state mRNA levels in leaves. Not expressed in roots.

The protein resides in the plastid. It localises to the chloroplast thylakoid membrane. Required for photosystem II assembly/stability and photoautotrophic growth under low light conditions. The polypeptide is Oxygen-evolving enhancer protein 3-1, chloroplastic (PSBQ1) (Arabidopsis thaliana (Mouse-ear cress)).